Here is a 152-residue protein sequence, read N- to C-terminus: Deoxyuridine 5'-triphosphate nucleotidohydrolase (152 aa).

Substrate contacts are provided by residues 71–73 (RSG), Asn-84, 88–90 (LID), and Met-98.

The protein belongs to the dUTPase family. Requires Mg(2+) as cofactor.

The enzyme catalyses dUTP + H2O = dUMP + diphosphate + H(+). It functions in the pathway pyrimidine metabolism; dUMP biosynthesis; dUMP from dCTP (dUTP route): step 2/2. Its function is as follows. This enzyme is involved in nucleotide metabolism: it produces dUMP, the immediate precursor of thymidine nucleotides and it decreases the intracellular concentration of dUTP so that uracil cannot be incorporated into DNA. The protein is Deoxyuridine 5'-triphosphate nucleotidohydrolase of Shewanella amazonensis (strain ATCC BAA-1098 / SB2B).